Consider the following 251-residue polypeptide: MDTTPASRGQWPVGIMSSVINVFASGKSCNSGGAPRSSVRRGHRAGAARDKSRGFDAPPRRPKGGVHPATTSKDPNKDIRGPPAPTPHKKYRGPAIPGEGRSGVHTTRPRRRAGRSGGMDPRQLVAQPQQRWAKTEIPTERRAEIDGLLPSLLNTLDGQIQGDAALLRYCVGAIKRELRRRWESVQPAHHVAASSGKPSPQLFNEAAQNAEDLSGDGKGCAGQSVQQEVLHSGSGVPPVCADCGKPAANKW.

The segment at 25–134 (SGKSCNSGGA…VAQPQQRWAK (110 aa)) is disordered. The short motif at 108 to 122 (RPRRRAGRSGGMDPR) is the Nuclear localization signal element. The Nuclear export signal signature appears at 149–153 (LPSLL).

As to quaternary structure, homooligomer. Interacts with host FIB2; this interaction, is required for ORF3 protein transiting through host Cajal body and nucleolus, relocalization of fibrillarin to the cytoplasm, and in presence of viral RNA, leads to the formation of stable RNPs.

It localises to the host cytoplasm. Its subcellular location is the host nucleus. It is found in the host nucleolus. Functionally, protects and provides long-distance movement to viral RNA. Self associates and binds viral RNA and fibrillarin to form filamentous ribonucleoproteins (RNPs) protected from RNase. ORF3 protein actually fulfills functions that are usually provided by capsid protein, which is absent from umbraviruses' genome. The chain is Long-distance movement protein (ORF3) from Clitoria (Hyacinth bean).